A 402-amino-acid chain; its full sequence is Putative cystathionine beta-lyase (402 aa).

Position 236 is an N6-(pyridoxal phosphate)lysine (Lys236).

The protein belongs to the class-II pyridoxal-phosphate-dependent aminotransferase family. MalY/PatB cystathionine beta-lyase subfamily. Pyridoxal 5'-phosphate is required as a cofactor.

It catalyses the reaction L,L-cystathionine + H2O = L-homocysteine + pyruvate + NH4(+). It carries out the reaction an S-substituted L-cysteine + H2O = a thiol + pyruvate + NH4(+). Its pathway is amino-acid biosynthesis; L-methionine biosynthesis via de novo pathway; L-homocysteine from L-cystathionine: step 1/1. The protein is Putative cystathionine beta-lyase of Mycobacterium leprae (strain TN).